Here is a 288-residue protein sequence, read N- to C-terminus: Single myb histone 4 (288 aa).

3 disordered regions span residues 1–42 (MGAP…PVLS), 62–87 (GLGS…SQPL), and 181–206 (DSLA…KPSK). Residues 1–60 (MGAPKQKWTSEEEDALRAGVRKHGAGKWRTIQKDPEFSPVLSSRSNIDLKDKWRNLSFSA) form the HTH myb-type domain. The segment at residues 28-56 (WRTIQKDPEFSPVLSSRSNIDLKDKWRNL) is a DNA-binding region (H-T-H motif). Positions 76–87 (PSSSPSSSSQPL) are enriched in low complexity. The region spanning 113-181 (TLPKYGAMIM…KIDKSYRLPD (69 aa)) is the H15 domain. Positions 230–250 (KVADAEAKAHDAHDQTMEAER) form a coiled coil.

This sequence belongs to the histone H1/H5 family. SMH subfamily. As to quaternary structure, forms a homodimer and heterodimers.

The protein localises to the nucleus. Its subcellular location is the chromosome. It is found in the nucleolus. It localises to the telomere. Its function is as follows. Binds preferentially double-stranded telomeric repeats, but may also bind to the single telomeric strand. This Zea mays (Maize) protein is Single myb histone 4 (SMH4).